A 468-amino-acid chain; its full sequence is Chromosomal replication initiator protein DnaA (468 aa).

The segment at 1 to 84 (MSSSLWLQCM…RFEVGSRPVA (84 aa)) is domain I, interacts with DnaA modulators. Positions 81-113 (RPVAAPKPAPTRTPADVAAESSAPAQLQARKPV) are disordered. The interval 84-131 (AAPKPAPTRTPADVAAESSAPAQLQARKPVHKTWDDDAQAIADINHRS) is domain II. The tract at residues 132-348 (NVNPKHKFNN…GALNRVIANA (217 aa)) is domain III, AAA+ region. ATP is bound by residues Gly176, Gly178, Lys179, and Thr180. The tract at residues 349–468 (NFTGRPITID…YSNLIRTLSS (120 aa)) is domain IV, binds dsDNA.

The protein belongs to the DnaA family. In terms of assembly, oligomerizes as a right-handed, spiral filament on DNA at oriC.

The protein localises to the cytoplasm. In terms of biological role, plays an essential role in the initiation and regulation of chromosomal replication. ATP-DnaA binds to the origin of replication (oriC) to initiate formation of the DNA replication initiation complex once per cell cycle. Binds the DnaA box (a 9 base pair repeat at the origin) and separates the double-stranded (ds)DNA. Forms a right-handed helical filament on oriC DNA; dsDNA binds to the exterior of the filament while single-stranded (ss)DNA is stabiized in the filament's interior. The ATP-DnaA-oriC complex binds and stabilizes one strand of the AT-rich DNA unwinding element (DUE), permitting loading of DNA polymerase. After initiation quickly degrades to an ADP-DnaA complex that is not apt for DNA replication. Binds acidic phospholipids. In Vibrio vulnificus (strain CMCP6), this protein is Chromosomal replication initiator protein DnaA.